The primary structure comprises 295 residues: MSPGGAGCSAGLLLTVGWLLLAGLQSTCGINVTAVQDPSLVSEGENEGEEEAENDSEVENEPQAEAEQDVSNKTVVKEVEFGMCTVTCGVGIREVLLTNGCPGGESKCIVRVEECRGPVDCGWGKPISENLESVRLSCVHTSPVNRFKYVWRLLRPNQQAVILANDSAILEVQRETHPMAFQCETLDNNEIVATVKFTVYTTAELQMKRSSRPDTDAVLVFVLTIGVIICIFVIFVLIFIIVNWATVKDFWASKASTTEIQSELSSMKYKDSTSLDQSPTEIPGHEDDALSEWNE.

An N-terminal signal peptide occupies residues 1 to 29 (MSPGGAGCSAGLLLTVGWLLLAGLQSTCG). The Extracellular portion of the chain corresponds to 30–220 (INVTAVQDPS…SRPDTDAVLV (191 aa)). The interval 39 to 71 (SLVSEGENEGEEEAENDSEVENEPQAEAEQDVS) is disordered. The span at 44–68 (GENEGEEEAENDSEVENEPQAEAEQ) shows a compositional bias: acidic residues. Residue Asn72 is glycosylated (N-linked (GlcNAc...) asparagine). Residues 221-241 (FVLTIGVIICIFVIFVLIFII) traverse the membrane as a helical segment. Topologically, residues 242 to 295 (VNWATVKDFWASKASTTEIQSELSSMKYKDSTSLDQSPTEIPGHEDDALSEWNE) are cytoplasmic. Ser256 carries the post-translational modification Phosphoserine. Positions 263–295 (ELSSMKYKDSTSLDQSPTEIPGHEDDALSEWNE) are disordered. Residue Tyr269 is modified to Phosphotyrosine. Ser278 and Ser291 each carry phosphoserine.

Interacts with CYLC1; the interaction may be relevant for proper acrosome attachment to the nuclear envelope. Post-translationally, N-glycosylated. As to expression, detected in spermatozoa (at protein level).

It is found in the cytoplasmic vesicle. The protein resides in the secretory vesicle. It localises to the acrosome inner membrane. Functionally, plays a role in acrosome expansion and establishment of normal sperm morphology during spermatogenesis. Important for male fertility. This chain is Sperm acrosome membrane-associated protein 1, found in Sus scrofa (Pig).